A 378-amino-acid chain; its full sequence is Acetylornithine deacetylase (378 aa).

His-76 is a Zn(2+) binding site. Residue Asp-78 is part of the active site. Asp-108 provides a ligand contact to Zn(2+). Glu-140 is an active-site residue. Residues Glu-141, Glu-165, and His-351 each coordinate Zn(2+).

Belongs to the peptidase M20A family. ArgE subfamily. As to quaternary structure, homodimer. The cofactor is Zn(2+). Requires Co(2+) as cofactor. Glutathione serves as cofactor.

The protein localises to the cytoplasm. The enzyme catalyses N(2)-acetyl-L-ornithine + H2O = L-ornithine + acetate. It participates in amino-acid biosynthesis; L-arginine biosynthesis; L-ornithine from N(2)-acetyl-L-ornithine (linear): step 1/1. In terms of biological role, catalyzes the hydrolysis of the amide bond of N(2)-acetylated L-amino acids. Cleaves the acetyl group from N-acetyl-L-ornithine to form L-ornithine, an intermediate in L-arginine biosynthesis pathway, and a branchpoint in the synthesis of polyamines. The sequence is that of Acetylornithine deacetylase from Aliivibrio fischeri (strain MJ11) (Vibrio fischeri).